Consider the following 417-residue polypeptide: NADH-quinone oxidoreductase subunit D (417 aa).

Belongs to the complex I 49 kDa subunit family. As to quaternary structure, NDH-1 is composed of 14 different subunits. Subunits NuoB, C, D, E, F, and G constitute the peripheral sector of the complex.

It localises to the cell inner membrane. It carries out the reaction a quinone + NADH + 5 H(+)(in) = a quinol + NAD(+) + 4 H(+)(out). Functionally, NDH-1 shuttles electrons from NADH, via FMN and iron-sulfur (Fe-S) centers, to quinones in the respiratory chain. The immediate electron acceptor for the enzyme in this species is believed to be ubiquinone. Couples the redox reaction to proton translocation (for every two electrons transferred, four hydrogen ions are translocated across the cytoplasmic membrane), and thus conserves the redox energy in a proton gradient. This chain is NADH-quinone oxidoreductase subunit D, found in Burkholderia mallei (strain NCTC 10247).